A 702-amino-acid polypeptide reads, in one-letter code: MRNENVAGLLAERASEAGWTDQPAYYAPDVVTHGQIHDGAARLGAVLANRGLCRGDRVLLCMPDSPELVQVLLACLARGILAFLANPELHRDDHAFQERDTQAALVITSGPLCDRFAPSTVVDAADLFSEAARVGPADYEILGGDAAAYATYTSGTTGPPKAAIHRHCDVFAFVEAMCRNALRLTPADIGLSSARMYFAYGLGNSVWFPLATGSSAVVNPLPVGAEVAATLSARFEPSVLYGVPNFFARVVDACSADSFRSVRCVVSAGEALEVGLAERLTEFFGGIPILDGVGSTEVGQTFVSNTVDEWRPGSLGKVLPPYQIRVVAPDGAAAGPGVEGDLWVRGPSIAESYWNWPEPLLTDEGWLDTRDRVCIDDDGWVTYACRADDTEIVGAVNINPREIERLIVEEDAVAEVAVVGVKEATGASTLQAFLVPASAEGIDGSVMRDIHRRLLTRLSAFKVPHRFAVVERLPRTANGKLLRSALRGQTPAKPIWELASAEHRSGAPGQLDDQSASALVSGSREVSLKERLAALQQERHRLVLDAVCGETAKMLGEPDPRSVNRDLAFSELGFDSQMTVELCHRLAAATGLRVPETVGWDYGSISGLAQYLEAELSGADRRVTPQSARSGARALPLIEAQLNKVEELTAAIADGEKPRVAERLRALLGTITEGQEHWGQRIAAASTPDEIFQLIDSEFGES.

One can recognise a Carrier domain in the interval 538–616 (ERHRLVLDAV…GLAQYLEAEL (79 aa)). Ser576 carries the post-translational modification O-(pantetheine 4'-phosphoryl)serine.

The protein belongs to the ATP-dependent AMP-binding enzyme family.

The catalysed reaction is holo-[4-hydroxyphenylalkanoate synthase] + 4-hydroxybenzoate + ATP = 4-hydroxyphenyl-[4-hydroxyphenylalkanoate synthase] + AMP + diphosphate. The protein operates within lipid metabolism; fatty acid biosynthesis. Its function is as follows. Catalyzes the adenylation of p-hydroxybenzoic acid (pHBA) to form p-hydroxybenzoic acid-AMP (pHBA-AMP), which is converted directly to p-hydroxybenzoyl-S-FadD22 (pHBA-S-FAdD22) thioester intermediate in a CoA-independent manner by attack of the phosphopantetheine thiol of FadD22. This intermediate primes the biosynthesis of the phenolphthiocerol (PPOL) by presenting the pHBA starter unit for elongation by Pks15/1. PPOL is an important intermediate in the biosynthesis of phenolic glycolipid (mycosid B). This Mycobacterium marinum (strain ATCC BAA-535 / M) protein is p-hydroxybenzoic acid--AMP ligase FadD22 (fadD22).